A 75-amino-acid chain; its full sequence is MARYFRRRKFCRFTAEDVIEIDYKDIATLKNYITESGKIVPSRITGTRAKYQRQLARAIKRARYLSLLPYTDLHQ.

Belongs to the bacterial ribosomal protein bS18 family. In terms of assembly, part of the 30S ribosomal subunit. Forms a tight heterodimer with protein bS6.

Functionally, binds as a heterodimer with protein bS6 to the central domain of the 16S rRNA, where it helps stabilize the platform of the 30S subunit. The sequence is that of Small ribosomal subunit protein bS18 from Baumannia cicadellinicola subsp. Homalodisca coagulata.